The sequence spans 178 residues: Acireductone dioxygenase (178 aa).

Fe(2+)-binding residues include His100, His102, Glu106, and His145. The Ni(2+) site is built by His100, His102, Glu106, and His145.

Belongs to the acireductone dioxygenase (ARD) family. In terms of assembly, monomer. The cofactor is Fe(2+). Requires Ni(2+) as cofactor.

The enzyme catalyses 1,2-dihydroxy-5-(methylsulfanyl)pent-1-en-3-one + O2 = 3-(methylsulfanyl)propanoate + CO + formate + 2 H(+). The catalysed reaction is 1,2-dihydroxy-5-(methylsulfanyl)pent-1-en-3-one + O2 = 4-methylsulfanyl-2-oxobutanoate + formate + 2 H(+). It functions in the pathway amino-acid biosynthesis; L-methionine biosynthesis via salvage pathway; L-methionine from S-methyl-5-thio-alpha-D-ribose 1-phosphate: step 5/6. In terms of biological role, catalyzes 2 different reactions between oxygen and the acireductone 1,2-dihydroxy-3-keto-5-methylthiopentene (DHK-MTPene) depending upon the metal bound in the active site. Fe-containing acireductone dioxygenase (Fe-ARD) produces formate and 2-keto-4-methylthiobutyrate (KMTB), the alpha-ketoacid precursor of methionine in the methionine recycle pathway. Ni-containing acireductone dioxygenase (Ni-ARD) produces methylthiopropionate, carbon monoxide and formate, and does not lie on the methionine recycle pathway. The polypeptide is Acireductone dioxygenase (Bacillus velezensis (strain DSM 23117 / BGSC 10A6 / LMG 26770 / FZB42) (Bacillus amyloliquefaciens subsp. plantarum)).